The primary structure comprises 67 residues: Small ribosomal subunit protein eS17 (67 aa).

Belongs to the eukaryotic ribosomal protein eS17 family.

The sequence is that of Small ribosomal subunit protein eS17 from Thermococcus gammatolerans (strain DSM 15229 / JCM 11827 / EJ3).